Reading from the N-terminus, the 264-residue chain is Thiazole synthase (264 aa).

The active-site Schiff-base intermediate with DXP is Lys106. 1-deoxy-D-xylulose 5-phosphate contacts are provided by residues Gly167, 193–194 (AG), and 215–216 (NS).

The protein belongs to the ThiG family. In terms of assembly, homotetramer. Forms heterodimers with either ThiH or ThiS.

It is found in the cytoplasm. It catalyses the reaction [ThiS sulfur-carrier protein]-C-terminal-Gly-aminoethanethioate + 2-iminoacetate + 1-deoxy-D-xylulose 5-phosphate = [ThiS sulfur-carrier protein]-C-terminal Gly-Gly + 2-[(2R,5Z)-2-carboxy-4-methylthiazol-5(2H)-ylidene]ethyl phosphate + 2 H2O + H(+). It functions in the pathway cofactor biosynthesis; thiamine diphosphate biosynthesis. In terms of biological role, catalyzes the rearrangement of 1-deoxy-D-xylulose 5-phosphate (DXP) to produce the thiazole phosphate moiety of thiamine. Sulfur is provided by the thiocarboxylate moiety of the carrier protein ThiS. In vitro, sulfur can be provided by H(2)S. This Prochlorococcus marinus (strain MIT 9215) protein is Thiazole synthase.